Consider the following 257-residue polypeptide: uncharacterized protein (257 aa).

The helical transmembrane segment at 7 to 27 threads the bilayer; it reads LMLGICLVLLIILIVGYVIMT.

Belongs to the staphylococcal tandem lipoprotein family.

Its subcellular location is the cell membrane. This is an uncharacterized protein from Staphylococcus aureus (strain Mu50 / ATCC 700699).